The sequence spans 158 residues: MSRHICWICKLCRDESKRLPSNLTLDEVLKWAQSLESLMATKYGPIVYTAYLKLEHSDENIKFWMACETYKKIASRRGRISRAKKLYNIYIQPQSPREINIDSTTREAIIKSIREPTQTCFEEAQKIVYMHMEMDSYPRFLKSEMYQQLLKTVQSQSS.

The RGS domain occupies 34 to 150 (SLESLMATKY…LKSEMYQQLL (117 aa)).

Its function is as follows. Inhibits signal transduction by increasing the GTPase activity of G protein alpha subunits thereby driving them into their inactive GDP-bound form. Binds to both G(i)-alpha and G(q)-alpha. This is Regulator of G-protein signaling 13 (Rgs13) from Mus musculus (Mouse).